Here is a 626-residue protein sequence, read N- to C-terminus: Carnitine O-acetyltransferase (626 aa).

Position 93 is an N6-succinyllysine (Lys93). Residue Lys261 is modified to N6-acetyllysine; alternate. N6-succinyllysine; alternate is present on Lys261. N6-acetyllysine is present on Lys268. The active-site Proton acceptor is the His343. CoA contacts are provided by residues Lys419 and 423-430 (KSQKLSPD). Residues Tyr452 and Ser454 each contribute to the (R)-carnitine site. Ser456 contributes to the CoA binding site. Residue Thr465 participates in (R)-carnitine binding. The CoA site is built by Arg504 and Gln555. Residues 624 to 626 (AKL) carry the Microbody targeting signal motif.

The protein belongs to the carnitine/choline acetyltransferase family. Monomer. As to expression, expressed in flagella of epididymal sperm.

The protein resides in the endoplasmic reticulum. It localises to the peroxisome. The protein localises to the mitochondrion inner membrane. The enzyme catalyses (R)-carnitine + acetyl-CoA = O-acetyl-(R)-carnitine + CoA. It catalyses the reaction propanoyl-CoA + (R)-carnitine = O-propanoyl-(R)-carnitine + CoA. It carries out the reaction butanoyl-CoA + (R)-carnitine = O-butanoyl-(R)-carnitine + CoA. The catalysed reaction is hexanoyl-CoA + (R)-carnitine = O-hexanoyl-(R)-carnitine + CoA. The enzyme catalyses octanoyl-CoA + (R)-carnitine = O-octanoyl-(R)-carnitine + CoA. It catalyses the reaction decanoyl-CoA + (R)-carnitine = O-decanoyl-(R)-carnitine + CoA. It carries out the reaction 3-methylbutanoyl-CoA + (R)-carnitine = O-3-methylbutanoyl-(R)-carnitine + CoA. The catalysed reaction is 2-methylpropanoyl-CoA + (R)-carnitine = O-isobutanoyl-(R)-carnitine + CoA. The enzyme catalyses 2-methylbutanoyl-CoA + (R)-carnitine = O-2-methylbutanoyl-(R)-carnitine + CoA. It catalyses the reaction acetoacetyl-CoA + (R)-carnitine = O-3-oxobutanoyl-(R)-carnitine + CoA. It carries out the reaction 3-hydroxybutanoyl-CoA + (R)-carnitine = O-3-hydroxybutanoyl-(R)-carnitine + CoA. The catalysed reaction is 4,8-dimethylnonanoyl-CoA + (R)-carnitine = O-4,8-dimethylnonanoyl-(R)-carnitine + CoA. The enzyme catalyses 2,6-dimethylheptanoyl-CoA + (R)-carnitine = O-2,6-dimethylheptanoyl-(R)-carnitine + CoA. Functionally, catalyzes the reversible transfer of acyl groups from carnitine to coenzyme A (CoA) and regulates the acyl-CoA/CoA ratio. Also plays a crucial role in the transport of fatty acids for beta-oxidation. Responsible for the synthesis of short- and branched-chain acylcarnitines. Active towards some branched-chain amino acid oxidation pathway (BCAAO) intermediates. Trans-2-enoyl-CoAs and 2-methylacyl-CoAs are poor substrates. The chain is Carnitine O-acetyltransferase from Rattus norvegicus (Rat).